Reading from the N-terminus, the 203-residue chain is Ribonuclease HII (203 aa).

Residues 15–201 form the RNase H type-2 domain; that stretch reads LLVAGLDEAG…VAQAPLRFPE (187 aa). 3 residues coordinate a divalent metal cation: Asp21, Glu22, and Asp111.

Belongs to the RNase HII family. Mn(2+) serves as cofactor. The cofactor is Mg(2+).

It localises to the cytoplasm. The enzyme catalyses Endonucleolytic cleavage to 5'-phosphomonoester.. In terms of biological role, endonuclease that specifically degrades the RNA of RNA-DNA hybrids. The polypeptide is Ribonuclease HII (Thermus thermophilus (strain ATCC 27634 / DSM 579 / HB8)).